A 210-amino-acid chain; its full sequence is dTTP/UTP pyrophosphatase (210 aa).

D89 (proton acceptor) is an active-site residue.

It belongs to the Maf family. YhdE subfamily. Requires a divalent metal cation as cofactor.

The protein resides in the cytoplasm. It carries out the reaction dTTP + H2O = dTMP + diphosphate + H(+). It catalyses the reaction UTP + H2O = UMP + diphosphate + H(+). Its function is as follows. Nucleoside triphosphate pyrophosphatase that hydrolyzes dTTP and UTP. May have a dual role in cell division arrest and in preventing the incorporation of modified nucleotides into cellular nucleic acids. This chain is dTTP/UTP pyrophosphatase, found in Burkholderia orbicola (strain AU 1054).